The following is a 487-amino-acid chain: 2-aminomuconic semialdehyde dehydrogenase (487 aa).

Residue 231–236 (GSTATA) participates in NAD(+) binding. Catalysis depends on glutamate 253, which acts as the Proton acceptor. Cysteine 287 (nucleophile) is an active-site residue.

The protein belongs to the aldehyde dehydrogenase family.

The protein resides in the cytoplasm. It carries out the reaction 2-aminomuconate 6-semialdehyde + NAD(+) + H2O = (2Z,4E)-2-aminomuconate + NADH + 2 H(+). It functions in the pathway amino-acid degradation; L-kynurenine degradation. Catalyzes the NAD-dependent oxidation of 2-aminomuconic semialdehyde of the kynurenine metabolic pathway in L-tryptophan degradation. The polypeptide is 2-aminomuconic semialdehyde dehydrogenase (aldh8a1) (Danio rerio (Zebrafish)).